The sequence spans 362 residues: Endopolygalacturonase II (362 aa).

A signal peptide spans methionine 1 to serine 20. Positions alanine 21–arginine 27 are excised as a propeptide. A disulfide bridge connects residues cysteine 30 and cysteine 45. The PbH1 1 repeat unit spans residues serine 156–asparagine 186. Catalysis depends on aspartate 201, which acts as the Proton donor. Cysteine 203 and cysteine 219 form a disulfide bridge. PbH1 repeat units follow at residues glycine 209–serine 229, valine 238–threonine 259, valine 267–glutamine 289, and threonine 301–alanine 322. Residue histidine 223 is part of the active site. The N-linked (GlcNAc...) asparagine glycan is linked to asparagine 240. 2 disulfide bridges follow: cysteine 329–cysteine 334 and cysteine 353–cysteine 362.

It belongs to the glycosyl hydrolase 28 family.

Its subcellular location is the secreted. It carries out the reaction (1,4-alpha-D-galacturonosyl)n+m + H2O = (1,4-alpha-D-galacturonosyl)n + (1,4-alpha-D-galacturonosyl)m.. In terms of biological role, involved in maceration and soft-rotting of plant tissue. Hydrolyzes the 1,4-alpha glycosidic bonds of de-esterified pectate in the smooth region of the plant cell wall. This chain is Endopolygalacturonase II (pgaII), found in Aspergillus awamori (Black koji mold).